Here is a 263-residue protein sequence, read N- to C-terminus: MNQIDRLLTIMQRLRDPENGCPWDKEQTFATIAPYTLEETYEVLDAIAREDFDDLRGELGDLLFQVVFYAQMAQEEGRFDFNDICAAISDKLERRHPHVFADSSAENSSEVLARWEQIKTEERAQKAQHSALDDIPRSLPALMRAQKIQKRCANVGFDWTTLGPVVDKVYEEIDEVMYEARQAVVDQAKLEEEMGDLLFATVNLARHLGTKAEIALQKANEKFERRFREVERIVAARGLEMTGVDLETMEEVWQQVKRQEIDL.

Residues 168–172 (KVYEE), Glu175, and 189–192 (KLEE) each bind ATP. Positions 172 and 175 each coordinate Mg(2+). Positions 193 and 196 each coordinate Mg(2+). ATP is bound by residues Asp196, 222 to 226 (KFERR), and Trp253.

The protein belongs to the nucleoside triphosphate pyrophosphohydrolase family. As to quaternary structure, homodimer. The cofactor is Mg(2+).

It carries out the reaction ATP + H2O = AMP + diphosphate + H(+). Functionally, involved in the regulation of bacterial cell survival under conditions of nutritional stress. Regulates the MazE-MazF toxin-antitoxin (TA) system that mediates programmed cell death (PCD). This is achieved by lowering the cellular concentration of (p)ppGpp produced by RelA under amino acid starvation, thus protecting the cell from the toxicity of MazF. Reduction of (p)ppGpp can be achieved by direct degradation of (p)ppGpp or by degradation of NTPs, which are substrates for (p)ppGpp synthesis by RelA. In Escherichia coli O157:H7, this protein is Nucleoside triphosphate pyrophosphohydrolase (mazG).